We begin with the raw amino-acid sequence, 398 residues long: NADH-ubiquinone oxidoreductase 49 kDa subunit (398 aa).

It belongs to the complex I 49 kDa subunit family.

Its subcellular location is the mitochondrion. It catalyses the reaction a ubiquinone + NADH + 5 H(+)(in) = a ubiquinol + NAD(+) + 4 H(+)(out). Its function is as follows. Core subunit of the mitochondrial membrane respiratory chain NADH dehydrogenase (Complex I) that is believed to belong to the minimal assembly required for catalysis. Complex I functions in the transfer of electrons from NADH to the respiratory chain. The immediate electron acceptor for the enzyme is believed to be ubiquinone. Component of the iron-sulfur (IP) fragment of the enzyme. Component of the iron-sulfur (IP) fragment of the enzyme. The sequence is that of NADH-ubiquinone oxidoreductase 49 kDa subunit (NAD7) from Cafeteria roenbergensis (Marine flagellate).